Consider the following 264-residue polypeptide: tRNA1(Val) (adenine(37)-N6)-methyltransferase (264 aa).

It belongs to the methyltransferase superfamily. tRNA (adenine-N(6)-)-methyltransferase family.

It localises to the cytoplasm. The enzyme catalyses adenosine(37) in tRNA1(Val) + S-adenosyl-L-methionine = N(6)-methyladenosine(37) in tRNA1(Val) + S-adenosyl-L-homocysteine + H(+). Its function is as follows. Specifically methylates the adenine in position 37 of tRNA(1)(Val) (anticodon cmo5UAC). The protein is tRNA1(Val) (adenine(37)-N6)-methyltransferase of Shewanella pealeana (strain ATCC 700345 / ANG-SQ1).